A 173-amino-acid chain; its full sequence is C-phycocyanin beta subunit (173 aa).

Residue N73 is modified to N4-methylasparagine. Residues C83 and C154 each coordinate (2R,3E)-phycocyanobilin.

The protein belongs to the phycobiliprotein family. Heterodimer of an alpha and a beta subunit, which further assembles into trimers and the trimers into hexamers. Contains two covalently linked bilin chromophores.

Its subcellular location is the cellular thylakoid membrane. Its function is as follows. Light-harvesting photosynthetic bile pigment-protein from the phycobiliprotein complex (phycobilisome, PBS). Phycocyanin is the major phycobiliprotein in the PBS rod. The polypeptide is C-phycocyanin beta subunit (cpcB1) (Synechococcus elongatus (strain ATCC 33912 / PCC 7942 / FACHB-805) (Anacystis nidulans R2)).